We begin with the raw amino-acid sequence, 72 residues long: uncharacterized protein (72 aa).

This is an uncharacterized protein from Mycobacterium tuberculosis (strain ATCC 25618 / H37Rv).